The sequence spans 111 residues: MAGKQAVSASGKWLDGIRKWYYNAAGFNKLGLMRDDTIYEDEDVKEAIRRLPENLYNDRMFRIKRALDLSLKHQILPKEQWTKYEEENFYLEPYLKEVIRERKEREEWAKK.

Ala-2 carries the post-translational modification N-acetylalanine. N6-acetyllysine; alternate is present on Lys-12. N6-succinyllysine; alternate is present on Lys-12. Lys-19 carries the N6-acetyllysine modification. The residue at position 78 (Lys-78) is an N6-acetyllysine; alternate. Lys-78 is modified (N6-succinyllysine; alternate). An N6-acetyllysine mark is found at Lys-83 and Lys-96.

It belongs to the UQCRB/QCR7 family. In terms of assembly, component of the ubiquinol-cytochrome c oxidoreductase (cytochrome b-c1 complex, complex III, CIII), a multisubunit enzyme composed of 11 subunits. The complex is composed of 3 respiratory subunits cytochrome b, cytochrome c1 and Rieske protein UQCRFS1, 2 core protein subunits UQCRC1/QCR1 and UQCRC2/QCR2, and 6 low-molecular weight protein subunits UQCRH/QCR6, UQCRB/QCR7, UQCRQ/QCR8, UQCR10/QCR9, UQCR11/QCR10 and subunit 9, the cleavage product of Rieske protein UQCRFS1. The complex exists as an obligatory dimer and forms supercomplexes (SCs) in the inner mitochondrial membrane with NADH-ubiquinone oxidoreductase (complex I, CI) and cytochrome c oxidase (complex IV, CIV), resulting in different assemblies (supercomplex SCI(1)III(2)IV(1) and megacomplex MCI(2)III(2)IV(2)).

It is found in the mitochondrion inner membrane. Functionally, component of the ubiquinol-cytochrome c oxidoreductase, a multisubunit transmembrane complex that is part of the mitochondrial electron transport chain which drives oxidative phosphorylation. The respiratory chain contains 3 multisubunit complexes succinate dehydrogenase (complex II, CII), ubiquinol-cytochrome c oxidoreductase (cytochrome b-c1 complex, complex III, CIII) and cytochrome c oxidase (complex IV, CIV), that cooperate to transfer electrons derived from NADH and succinate to molecular oxygen, creating an electrochemical gradient over the inner membrane that drives transmembrane transport and the ATP synthase. The cytochrome b-c1 complex catalyzes electron transfer from ubiquinol to cytochrome c, linking this redox reaction to translocation of protons across the mitochondrial inner membrane, with protons being carried across the membrane as hydrogens on the quinol. In the process called Q cycle, 2 protons are consumed from the matrix, 4 protons are released into the intermembrane space and 2 electrons are passed to cytochrome c. The chain is Cytochrome b-c1 complex subunit 7 (UQCRB) from Pongo abelii (Sumatran orangutan).